The chain runs to 42 residues: Photosystem I reaction center subunit IX (42 aa).

The chain crosses the membrane as a helical span at residues 7-27; it reads YLSTAPVLAAIWFGILAGLLI.

The protein belongs to the PsaJ family.

The protein resides in the plastid. Its subcellular location is the chloroplast thylakoid membrane. Functionally, may help in the organization of the PsaE and PsaF subunits. This Staurastrum punctulatum (Green alga) protein is Photosystem I reaction center subunit IX.